A 245-amino-acid polypeptide reads, in one-letter code: MENKPILSFEKVSIIYKKAPLLQNISFKVMAKENVCLLGKSGVGKSSLLNSVTNTKIVKSGLVYFDGVASNKKEYKKLKKQCSYLDQIPNLIDTDYVYEAILRSAKQKLTWLQKLICFEPKWIKDKILAILKEVNLNDYVSCIIKDLSAGQKQRVEIAKLFFKSPKLLLVDEPTTGLDPLTASKIMDLITDFVKREKITLVFVTHDIDLALKYSTRIIALKNHALVLDRLTEKLTKEQLYKIYDN.

In terms of domain architecture, ABC transporter spans 7-245; the sequence is LSFEKVSIIY…KEQLYKIYDN (239 aa). 39–46 lines the ATP pocket; sequence GKSGVGKS.

Belongs to the ABC transporter superfamily.

Part of a high-affinity transport system. The polypeptide is Probable ABC transporter ATP-binding protein p29 (p29) (Mycoplasma genitalium (strain ATCC 33530 / DSM 19775 / NCTC 10195 / G37) (Mycoplasmoides genitalium)).